The primary structure comprises 125 residues: Ribonuclease P protein component (125 aa).

The protein belongs to the RnpA family. In terms of assembly, consists of a catalytic RNA component (M1 or rnpB) and a protein subunit.

The catalysed reaction is Endonucleolytic cleavage of RNA, removing 5'-extranucleotides from tRNA precursor.. Its function is as follows. RNaseP catalyzes the removal of the 5'-leader sequence from pre-tRNA to produce the mature 5'-terminus. It can also cleave other RNA substrates such as 4.5S RNA. The protein component plays an auxiliary but essential role in vivo by binding to the 5'-leader sequence and broadening the substrate specificity of the ribozyme. The sequence is that of Ribonuclease P protein component from Clostridium botulinum (strain Eklund 17B / Type B).